Consider the following 396-residue polypeptide: Acetate kinase (396 aa).

Asn-8 contacts Mg(2+). Lys-15 is an ATP binding site. Arg-89 is a substrate binding site. Catalysis depends on Asp-146, which acts as the Proton donor/acceptor. Residues 206–210 (HIGNG), 283–285 (DMR), and 331–335 (GMGEN) contribute to the ATP site. Residue Glu-383 coordinates Mg(2+).

It belongs to the acetokinase family. As to quaternary structure, homodimer. Mg(2+) serves as cofactor. Mn(2+) is required as a cofactor.

Its subcellular location is the cytoplasm. It carries out the reaction acetate + ATP = acetyl phosphate + ADP. It functions in the pathway metabolic intermediate biosynthesis; acetyl-CoA biosynthesis; acetyl-CoA from acetate: step 1/2. Functionally, catalyzes the formation of acetyl phosphate from acetate and ATP. Can also catalyze the reverse reaction. This is Acetate kinase from Streptococcus uberis (strain ATCC BAA-854 / 0140J).